A 440-amino-acid chain; its full sequence is MSYFEHIPAIRYEGPQSDNPLAYRHYDRTKRVLGKTLEEHLRIAVCYWHTFVWPGQDVFGQGALRRPWQQPGEPLERARQKADAAFAFFTKLGTPFYTFHDTDVAPEGANLHEYVENFARMVDYLGEHQQASGVRLLWGTANLFSHPRFAAGAATSPNPDAFAWAATQVCHALDATHRLGGENYVLWGGREGYETLLNTDLAREREQLARFLAMVVEHKHRIGFTGALLIEPKPQEPTKHQYDYDVATVHGLLTQYGLQNEIRVNIEANHATLAGHSFHHEIANAFALGVFGSVDANRGDPQNGWDTDQFPNSVEELTLAFYEILRHGGFTTGGMNFDAKVRRQSVDPEDLFHGHIGAIDVLALALERAAVLVENDRLDALRRRRYAQWDSEFGRKILAGGYSLQSLAADALARGVNPQHASGAQERLENIVNQAIYALR.

Active-site residues include His100 and Asp103. Positions 231, 267, 270, 295, 306, 308, and 338 each coordinate Mg(2+).

This sequence belongs to the xylose isomerase family. As to quaternary structure, homotetramer. Mg(2+) is required as a cofactor.

The protein localises to the cytoplasm. The catalysed reaction is alpha-D-xylose = alpha-D-xylulofuranose. This chain is Xylose isomerase, found in Burkholderia thailandensis (strain ATCC 700388 / DSM 13276 / CCUG 48851 / CIP 106301 / E264).